We begin with the raw amino-acid sequence, 592 residues long: A-type ATP synthase subunit A (592 aa).

233–240 is an ATP binding site; the sequence is GPFGSGKT.

It belongs to the ATPase alpha/beta chains family. As to quaternary structure, has multiple subunits with at least A(3), B(3), C, D, E, F, H, I and proteolipid K(x).

It is found in the cell membrane. It catalyses the reaction ATP + H2O + 4 H(+)(in) = ADP + phosphate + 5 H(+)(out). In terms of biological role, component of the A-type ATP synthase that produces ATP from ADP in the presence of a proton gradient across the membrane. The A chain is the catalytic subunit. The polypeptide is A-type ATP synthase subunit A (Saccharolobus islandicus (strain Y.N.15.51 / Yellowstone #2) (Sulfolobus islandicus)).